A 181-amino-acid chain; its full sequence is Crossover junction endodeoxyribonuclease RuvC (181 aa).

Residues Asp7, Glu67, and Asp139 contribute to the active site. Mg(2+) contacts are provided by Asp7, Glu67, and Asp139.

Belongs to the RuvC family. Homodimer which binds Holliday junction (HJ) DNA. The HJ becomes 2-fold symmetrical on binding to RuvC with unstacked arms; it has a different conformation from HJ DNA in complex with RuvA. In the full resolvosome a probable DNA-RuvA(4)-RuvB(12)-RuvC(2) complex forms which resolves the HJ. Mg(2+) is required as a cofactor.

It is found in the cytoplasm. It catalyses the reaction Endonucleolytic cleavage at a junction such as a reciprocal single-stranded crossover between two homologous DNA duplexes (Holliday junction).. The RuvA-RuvB-RuvC complex processes Holliday junction (HJ) DNA during genetic recombination and DNA repair. Endonuclease that resolves HJ intermediates. Cleaves cruciform DNA by making single-stranded nicks across the HJ at symmetrical positions within the homologous arms, yielding a 5'-phosphate and a 3'-hydroxyl group; requires a central core of homology in the junction. The consensus cleavage sequence is 5'-(A/T)TT(C/G)-3'. Cleavage occurs on the 3'-side of the TT dinucleotide at the point of strand exchange. HJ branch migration catalyzed by RuvA-RuvB allows RuvC to scan DNA until it finds its consensus sequence, where it cleaves and resolves the cruciform DNA. The protein is Crossover junction endodeoxyribonuclease RuvC of Bordetella avium (strain 197N).